A 626-amino-acid polypeptide reads, in one-letter code: Basic helix-loop-helix ARNT-like protein 1 (626 aa).

A disordered region spans residues Met-1 to Arg-60. Ser-17 is modified (phosphoserine; by GSK3-beta). Low complexity predominate over residues Ser-17–Gly-32. Thr-21 is subject to Phosphothreonine; by GSK3-beta. A Nuclear localization signal motif is present at residues Asn-36–Gly-41. Basic and acidic residues predominate over residues Asp-51–Arg-60. The region spanning Asn-72 to Leu-125 is the bHLH domain. Ser-78 is subject to Phosphoserine. Ser-90 bears the Phosphoserine; by CK2 mark. Residues Leu-142 to Leu-152 carry the Nuclear export signal 1 motif. The 73-residue stretch at Ser-143 to Pro-215 folds into the PAS 1 domain. Lys-252 participates in a covalent cross-link: Glycyl lysine isopeptide (Lys-Gly) (interchain with G-Cter in SUMO2 and SUMO3). Lys-259 participates in a covalent cross-link: Glycyl lysine isopeptide (Lys-Gly) (interchain with G-Cter in SUMO); alternate. Residue Lys-259 forms a Glycyl lysine isopeptide (Lys-Gly) (interchain with G-Cter in SUMO2); alternate linkage. The 71-residue stretch at Pro-326–Arg-396 folds into the PAS 2 domain. Residues Leu-361–Leu-369 carry the Nuclear export signal 2 motif. The 44-residue stretch at Asn-402 to Val-445 folds into the PAC domain. Disordered regions lie at residues Ala-458–Gly-493 and Gly-511–Asp-596. Over residues Ile-484–Gly-493 the composition is skewed to gly residues. Residues Arg-508–Gln-588 form an interaction with CIART region. The span at Gly-511–Pro-521 shows a compositional bias: low complexity. Lys-538 is subject to N6-acetyllysine.

As to quaternary structure, component of the circadian clock oscillator which includes the CRY1/2 proteins, CLOCK or NPAS2, BMAL1 or BMAL2, CSNK1D and/or CSNK1E, TIMELESS and the PER1/2/3 proteins. Forms a heterodimer with CLOCK. The CLOCK-BMAL1 heterodimer is required for E-box-dependent transactivation, for CLOCK nuclear translocation and degradation, and, for phosphorylation of both CLOCK and BMAL1. Part of a nuclear complex which also includes RACK1 and PRKCA; RACK1 and PRKCA are recruited to the complex in a circadian manner. Interacts with NPAS2. Interacts with EZH2. Interacts with SUMO3. Interacts with SIRT1. Interacts with AHR. Interacts with ID1, ID2 and ID3. Interacts with DDX4. Interacts with OGT. Interacts with EED and SUZ12. Interacts with MTA1. Interacts with CIART. Interacts with HSP90. Interacts with KAT2B and EP300. Interacts with BHLHE40/DEC1 and BHLHE41/DEC2. Interacts with RELB and the interaction is enhanced in the presence of CLOCK. Interacts with PER1, PER2, CRY1 and CRY2 and this interaction requires a translocation to the nucleus. Interaction of the CLOCK-BMAL1 heterodimer with PER or CRY inhibits transcription activation. Interaction of the CLOCK-BMAL1 with CRY1 is independent of DNA but with PER2 is off DNA. The CLOCK-BMAL1 heterodimer interacts with GSK3B. Interacts with KDM5A. Interacts with KMT2A; in a circadian manner. Interacts with UBE3A. Interacts with PRKCG. Interacts with MAGEL2. Interacts with NCOA2. Interacts with THRAP3. The CLOCK-BMAL1 heterodimer interacts with PASD1. Interacts with PASD1. Interacts with USP9X. Interacts with PIWIL2 (via PIWI domain). Interacts with HDAC3. Interacts with HNF4A. Ubiquitinated, leading to its proteasomal degradation. Deubiquitinated by USP9X. In terms of processing, O-glycosylated; contains O-GlcNAc. O-glycosylation by OGT prevents protein degradation by inhibiting ubiquitination. It also stabilizes the CLOCK-BMAL1 heterodimer thereby increasing CLOCK-BMAL1-mediated transcription of genes in the negative loop of the circadian clock such as PER1/2/3 and CRY1/2. Post-translationally, acetylated on Lys-538 by CLOCK during the repression phase of the circadian cycle. Acetylation facilitates recruitment of CRY1 protein and initiates the repression phase of the circadian cycle. Acetylated at Lys-538 by KAT5 during the activation phase of the cycle, leading to recruitment of the positive transcription elongation factor b (P-TEFb) and BRD4, followed by productive elongation of circadian transcripts. Deacetylated by SIRT1, which may result in decreased protein stability. Phosphorylated upon dimerization with CLOCK. Phosphorylation enhances the transcriptional activity, alters the subcellular localization and decreases the stability of the CLOCK-BMAL1 heterodimer by promoting its degradation. Phosphorylation shows circadian variations in the liver with a peak between CT10 to CT14. Phosphorylation at Ser-90 by CK2 is essential for its nuclear localization, its interaction with CLOCK and controls CLOCK nuclear entry. Dephosphorylation at Ser-78 is important for dimerization with CLOCK and transcriptional activity. In terms of processing, sumoylated on Lys-259 upon dimerization with CLOCK. Predominantly conjugated to poly-SUMO2/3 rather than SUMO1 and the level of these conjugates undergo rhythmic variation, peaking at CT9-CT12. Sumoylation localizes it exclusively to the PML body and promotes its ubiquitination in the PML body, ubiquitin-dependent proteasomal degradation and the transcriptional activity of the CLOCK-BMAL1 heterodimer. Post-translationally, undergoes lysosome-mediated degradation in a time-dependent manner in the liver. As to expression, highly expressed in the suprachiasmatic nucleus (SCN). Also expressed in all other tissues examined including kidney, intestine, liver, heart, spleen, brain, muscle, lung, harderian gland and eye. Low expression in kidney and spleen.

The protein resides in the nucleus. It is found in the cytoplasm. The protein localises to the PML body. In terms of biological role, transcriptional activator which forms a core component of the circadian clock. The circadian clock, an internal time-keeping system, regulates various physiological processes through the generation of approximately 24 hour circadian rhythms in gene expression, which are translated into rhythms in metabolism and behavior. It is derived from the Latin roots 'circa' (about) and 'diem' (day) and acts as an important regulator of a wide array of physiological functions including metabolism, sleep, body temperature, blood pressure, endocrine, immune, cardiovascular, and renal function. Consists of two major components: the central clock, residing in the suprachiasmatic nucleus (SCN) of the brain, and the peripheral clocks that are present in nearly every tissue and organ system. Both the central and peripheral clocks can be reset by environmental cues, also known as Zeitgebers (German for 'timegivers'). The predominant Zeitgeber for the central clock is light, which is sensed by retina and signals directly to the SCN. The central clock entrains the peripheral clocks through neuronal and hormonal signals, body temperature and feeding-related cues, aligning all clocks with the external light/dark cycle. Circadian rhythms allow an organism to achieve temporal homeostasis with its environment at the molecular level by regulating gene expression to create a peak of protein expression once every 24 hours to control when a particular physiological process is most active with respect to the solar day. Transcription and translation of core clock components (CLOCK, NPAS2, BMAL1, BMAL2, PER1, PER2, PER3, CRY1 and CRY2) plays a critical role in rhythm generation, whereas delays imposed by post-translational modifications (PTMs) are important for determining the period (tau) of the rhythms (tau refers to the period of a rhythm and is the length, in time, of one complete cycle). A diurnal rhythm is synchronized with the day/night cycle, while the ultradian and infradian rhythms have a period shorter and longer than 24 hours, respectively. Disruptions in the circadian rhythms contribute to the pathology of cardiovascular diseases, cancer, metabolic syndromes and aging. A transcription/translation feedback loop (TTFL) forms the core of the molecular circadian clock mechanism. Transcription factors, CLOCK or NPAS2 and BMAL1 or BMAL2, form the positive limb of the feedback loop, act in the form of a heterodimer and activate the transcription of core clock genes and clock-controlled genes (involved in key metabolic processes), harboring E-box elements (5'-CACGTG-3') within their promoters. The core clock genes: PER1/2/3 and CRY1/2 which are transcriptional repressors form the negative limb of the feedback loop and interact with the CLOCK|NPAS2-BMAL1|BMAL2 heterodimer inhibiting its activity and thereby negatively regulating their own expression. This heterodimer also activates nuclear receptors NR1D1/2 and RORA/B/G, which form a second feedback loop and which activate and repress BMAL1 transcription, respectively. BMAL1 positively regulates myogenesis and negatively regulates adipogenesis via the transcriptional control of the genes of the canonical Wnt signaling pathway. Plays a role in normal pancreatic beta-cell function; regulates glucose-stimulated insulin secretion via the regulation of antioxidant genes NFE2L2/NRF2 and its targets SESN2, PRDX3, CCLC and CCLM. Negatively regulates the mTORC1 signaling pathway; regulates the expression of MTOR and DEPTOR. Controls diurnal oscillations of Ly6C inflammatory monocytes; rhythmic recruitment of the PRC2 complex imparts diurnal variation to chemokine expression that is necessary to sustain Ly6C monocyte rhythms. Regulates the expression of HSD3B2, STAR, PTGS2, CYP11A1, CYP19A1 and LHCGR in the ovary and also the genes involved in hair growth. Plays an important role in adult hippocampal neurogenesis by regulating the timely entry of neural stem/progenitor cells (NSPCs) into the cell cycle and the number of cell divisions that take place prior to cell-cycle exit. Regulates the circadian expression of CIART and KLF11. The CLOCK-BMAL1 heterodimer regulates the circadian expression of SERPINE1/PAI1, VWF, B3, CCRN4L/NOC, NAMPT, DBP, MYOD1, PPARGC1A, PPARGC1B, SIRT1, GYS2, F7, NGFR, GNRHR, BHLHE40/DEC1, ATF4, MTA1, KLF10 and also genes implicated in glucose and lipid metabolism. Promotes rhythmic chromatin opening, regulating the DNA accessibility of other transcription factors. The NPAS2-BMAL1 heterodimer positively regulates the expression of MAOA, F7 and LDHA and modulates the circadian rhythm of daytime contrast sensitivity by regulating the rhythmic expression of adenylate cyclase type 1 (ADCY1) in the retina. The preferred binding motif for the CLOCK-BMAL1 heterodimer is 5'-CACGTGA-3', which contains a flanking adenine nucleotide at the 3-prime end of the canonical 6-nucleotide E-box sequence. CLOCK specifically binds to the half-site 5'-CAC-3', while BMAL1 binds to the half-site 5'-GTGA-3'. The CLOCK-BMAL1 heterodimer also recognizes the non-canonical E-box motifs 5'-AACGTGA-3' and 5'-CATGTGA-3'. Essential for the rhythmic interaction of CLOCK with ASS1 and plays a critical role in positively regulating CLOCK-mediated acetylation of ASS1. Plays a role in protecting against lethal sepsis by limiting the expression of immune checkpoint protein CD274 in macrophages in a PKM2-dependent manner. Regulates the diurnal rhythms of skeletal muscle metabolism via transcriptional activation of genes promoting triglyceride synthesis (DGAT2) and metabolic efficiency (COQ10B). The sequence is that of Basic helix-loop-helix ARNT-like protein 1 (Bmal1) from Nannospalax galili (Northern Israeli blind subterranean mole rat).